Here is a 245-residue protein sequence, read N- to C-terminus: MMDPNSTSEDVKFTPDPYQVPFVQAFDQATRVYQDLGGPSQAPLPCVLWPVLPEPLPQGQLTAYHVSAAPTGSWFPAPQPAPENAYQAYAAPQLFPVSDITQNQLTNQAGGEAPQPGDNSTVQPAAAVVLACPGANQEQQLADIGAPQPAPAAAPARRTRKPLQPESLEECDSELEIKRYKNRVASRKCRAKFKHLLQHYREVASAKSSENDRLRLLLKQMCPSLDVDSIIPRTPDVLHEDLLNF.

The transactivation stretch occupies residues 1-167; the sequence is MMDPNSTSED…RTRKPLQPES (167 aa). Phosphothreonine occurs at positions 14 and 159. The segment at 145–167 is disordered; sequence GAPQPAPAAAPARRTRKPLQPES. The Bipartite nuclear localization signal signature appears at 157-194; it reads RRTRKPLQPESLEECDSELEIKRYKNRVASRKCRAKFK. Residues S167, S173, and S186 each carry the phosphoserine modification. Residues 178-195 are basic motif; sequence KRYKNRVASRKCRAKFKH. The 51-residue stretch at 178–228 folds into the bZIP domain; it reads KRYKNRVASRKCRAKFKHLLQHYREVASAKSSENDRLRLLLKQMCPSLDVD. The segment at 196-228 is leucine-zipper; it reads LLQHYREVASAKSSENDRLRLLLKQMCPSLDVD. Positions 229–245 are accessory activation domain; the sequence is SIIPRTPDVLHEDLLNF.

The protein belongs to the bZIP family. Homodimer. Interacts (via b-ZIP domain) with the DNA polymerase processivity factor BMRF1 (via N-terminus); this interaction may inhibit BZLF1-induced transcription of the BMRF1 promoter. Interacts with human UBN1, CRTC2 and RACK1. Interacts (via N-terminus) with human PAX5 (via N-terminus); this interaction inhibits BZLF1-mediated lytic viral reactivation. Interacts (via leucine-zipper domain) with host CEBPA; this interaction induces G1 host cell cycle arrest. Interacts (via C-terminus) with host TP53BP1 (via C-terminus); this interaction is involved in the activation of the viral lytic cycle. Interacts with host chromatin-remodeling ATPase INO80; this interaction participates to the activation of early lytic viral genes by BZLF1. Interacts with host regulator of chromatin SMARCA5/hSNF2H; this interaction participates to the activation of early lytic viral genes by BZLF1. Interacts with host PLSCR1/Phospholipid scramblase 1; this interaction negatively regulates the transcriptional regulatory activity of BZLF1 by preventing the formation of the BZLF1-CBP complex.

It localises to the host nucleus. Its function is as follows. Transcription factor that acts as a molecular switch to induce the transition from the latent to the lytic or productive phase of the virus cycle. Mediates the switch from the latent to the lytic cycle of infection in cells containing a highly methylated viral genome. Probably binds to silenced chromatin and recruits host chromatin-remodeling enzymes. Regulates this switch by binding to 2 types of ZEBRA response elements (ZREs): the CpG-free AP-1 like elements (latency) and the methylated CpG-containing elements (lytic replication). Activates preferentially the methylated forms of the viral lytic R (BRLF1) and Na (BRRF1) gene promoters, the latters being the first genes activated during Z-mediated reactivation in latently infected cells. BZLF1 and BRLF1 act together to trigger lytic replication. Also binds the lytic origin of replication, oriLyt. Induces G1 cell cycle arrest by stabilizing the host CCAAT/enhancer binding protein CEBPA. This function is important because the lytic cycle preferentially takes place in host cells arrested in G1. This Homo sapiens (Human) protein is Lytic switch protein BZLF1.